The primary structure comprises 225 residues: Cytidylate kinase (225 aa).

11 to 19 (GPAAAGKST) lines the ATP pocket.

Belongs to the cytidylate kinase family. Type 1 subfamily.

The protein resides in the cytoplasm. The catalysed reaction is CMP + ATP = CDP + ADP. The enzyme catalyses dCMP + ATP = dCDP + ADP. In Bacillus pumilus (strain SAFR-032), this protein is Cytidylate kinase.